The following is a 720-amino-acid chain: Polyribonucleotide nucleotidyltransferase (720 aa).

Asp-487 and Asp-493 together coordinate Mg(2+). The KH domain occupies 554–613; sequence PRIETFKIPTDKIREVIGTGGKVIREIVEKTGAKINIEDDGTVKVASNDGEAMKAAIKWI. An S1 motif domain is found at 623-691; sequence GQIYEGTVVK…DRGKTRLSMK (69 aa). The segment at 691–720 is disordered; sequence KAVDQQTGEDLEAAGHKAEKADAPREAAGE. Residues 703–720 are compositionally biased toward basic and acidic residues; sequence AAGHKAEKADAPREAAGE.

It belongs to the polyribonucleotide nucleotidyltransferase family. Mg(2+) is required as a cofactor.

It is found in the cytoplasm. The catalysed reaction is RNA(n+1) + phosphate = RNA(n) + a ribonucleoside 5'-diphosphate. In terms of biological role, involved in mRNA degradation. Catalyzes the phosphorolysis of single-stranded polyribonucleotides processively in the 3'- to 5'-direction. The sequence is that of Polyribonucleotide nucleotidyltransferase from Nitrobacter hamburgensis (strain DSM 10229 / NCIMB 13809 / X14).